The following is a 975-amino-acid chain: Nesprin-3 (975 aa).

Topologically, residues 1 to 925 (MTQQPQEDFE…PCSLLQKACR (925 aa)) are cytoplasmic. Spectrin repeat units lie at residues 220 to 325 (QDHE…RLRG) and 647 to 740 (REHC…QALR). The interval 778–798 (LINPQDPIPRRQHGANPLEGH) is disordered. One can recognise a KASH domain in the interval 917–975 (CSLLQKACRVALPLQLLLLLFLLLLFLLPAGEEERSCALANNFARSFALMLRYNGPPPT). The helical; Anchor for type IV membrane protein transmembrane segment at 926–946 (VALPLQLLLLLFLLLLFLLPA) threads the bilayer. The Perinuclear space segment spans residues 947 to 975 (GEEERSCALANNFARSFALMLRYNGPPPT).

This sequence belongs to the nesprin family. As to quaternary structure, core component of LINC complexes which are composed of inner nuclear membrane SUN domain-containing proteins coupled to outer nuclear membrane KASH domain-containing nesprins. SUN and KASH domain-containing proteins seem to bind each other promiscuously; however, differentially expression of LINC complex constituents can give rise to specific assemblies. Interacts with SUN1 and SUN2; probably forming respective LINC complexes. Interacts with PLEC (via actin-binding domain). Interacts with DST. Interacts with SYNE1. Interacts (via KASH domain) with TOR1A (ATP-bound); the interaction is required for SYNE3 nuclear envelope localization. In terms of processing, the disulfid bond with SUN1 or SUN2 is required for stability of the respective LINC complex under tensile forces. Ubiquitous.

The protein localises to the nucleus outer membrane. The protein resides in the nucleus envelope. It localises to the rough endoplasmic reticulum. Functionally, as a component of the LINC (LInker of Nucleoskeleton and Cytoskeleton) complex involved in the connection between the nuclear lamina and the cytoskeleton. The nucleocytoplasmic interactions established by the LINC complex play an important role in the transmission of mechanical forces across the nuclear envelope and in nuclear movement and positioning. Probable anchoring protein which tethers the nucleus to the cytoskeleton by binding PLEC which can associate with the intermediate filament system. Plays a role in the regulation of aortic epithelial cell morphology, and is required for flow-induced centrosome polarization and directional migration in aortic endothelial cells. This chain is Nesprin-3 (Syne3), found in Mus musculus (Mouse).